A 208-amino-acid chain; its full sequence is NADH-ubiquinone oxidoreductase chain 4 (208 aa).

Transmembrane regions (helical) follow at residues 23-43, 60-80, 93-113, 114-134, 147-167, and 185-205; these read VWINVTTYSLLINLISINLLW, PLSAPLLVLTTWLLPLMLLAS, KLYISLLVCLQTLLIMTFSAN, ELIMFYILFEATLIPTLIIIT, IYFLFYTLVGSIPLLIALIYI, and PINQTWSNNILWLACIMAFMV.

Belongs to the complex I subunit 4 family. As to quaternary structure, core subunit of respiratory chain NADH dehydrogenase (Complex I) which is composed of 45 different subunits.

The protein resides in the mitochondrion inner membrane. It carries out the reaction a ubiquinone + NADH + 5 H(+)(in) = a ubiquinol + NAD(+) + 4 H(+)(out). Functionally, core subunit of the mitochondrial membrane respiratory chain NADH dehydrogenase (Complex I) which catalyzes electron transfer from NADH through the respiratory chain, using ubiquinone as an electron acceptor. Essential for the catalytic activity and assembly of complex I. In Microtus pennsylvanicus (Meadow vole), this protein is NADH-ubiquinone oxidoreductase chain 4 (MT-ND4).